The chain runs to 523 residues: Sodium-dependent lysophosphatidylcholine symporter 1-B (523 aa).

Residues 1 to 34 are Cytoplasmic-facing; that stretch reads MAKGEGAEQYTNTSLLQKPSPDEVKLAKHETKSR. A helical transmembrane segment spans residues 35–64; that stretch reads LSVCSKLCYAIGGAPYQITGCAIGFFLQIY. Over 65–75 the chain is Extracellular; the sequence is LLDVALLDPFY. The chain crosses the membrane as a helical span at residues 76 to 96; sequence ASIILFVGRAWDAVTDPTVGF. The Cytoplasmic segment spans residues 97 to 108; sequence LVSRTPWTRFGR. Residues 109-128 form a helical membrane-spanning segment; that stretch reads MMPWIVLSTPFAVLCYFLIW. The Extracellular portion of the chain corresponds to 129-138; the sequence is YVPSVDQGKV. The helical transmembrane segment at 139–163 threads the bilayer; the sequence is VWYLIFYCCFQTLQTCFHVPYSALT. Residues 164–170 are Cytoplasmic-facing; that stretch reads MFISTEQ. A helical transmembrane segment spans residues 171–202; that stretch reads KERDSATAYRMTVEVLGTLIGTAIQGQIVGMA. Residues 203 to 226 are Extracellular-facing; that stretch reads NAPCISTEIDLNSTGLEVAPDVNI. A disulfide bridge connects residues Cys-206 and Cys-457. 2 N-linked (GlcNAc...) asparagine glycosylation sites follow: Asn-214 and Asn-225. Residues 227 to 260 form a helical membrane-spanning segment; that stretch reads TDPHVSLQDLRNAYMIASGVICAIYVVCAVVLFL. Residues 261 to 290 are Cytoplasmic-facing; the sequence is GVKEQKDTCRVRTEPMSFFQGICMVMGHGP. The helical transmembrane segment at 291–317 threads the bilayer; it reads YAKLVMGFLFTSLAFMLLEGNFALFCI. Over 318–328 the chain is Extracellular; that stretch reads YNLGFRNDFQN. Residues 329 to 347 form a helical membrane-spanning segment; that stretch reads VLLVIMLSATLAIPFWQWF. At 348-351 the chain is on the cytoplasmic side; sequence LTKF. A helical membrane pass occupies residues 352-373; it reads GKKTAVYIGTTSVVPFLISVVL. The Extracellular portion of the chain corresponds to 374–376; the sequence is VPS. Residues 377–413 form a helical membrane-spanning segment; it reads SLAVTYIASFAAGVSVAAAFLLPWSMLPDVVDDFKVQ. Over 414–423 the chain is Cytoplasmic; it reads NPESQGHEAI. The helical transmembrane segment at 424-450 threads the bilayer; sequence FYSFYVFFTKFASGVSLGVSTLSLDFA. The Extracellular portion of the chain corresponds to 451-462; sequence GYVTRGCTQPGE. Residues 463–486 form a helical membrane-spanning segment; the sequence is VKLTLKILVSAAPIVLIIIGLLIF. Topologically, residues 487–523 are cytoplasmic; it reads ISYPINEEKRQGNRKLLNEQRENEMDSETDSTELNVV. The interval 504–523 is disordered; it reads NEQRENEMDSETDSTELNVV.

This sequence belongs to the major facilitator superfamily. Expressed in the developing nervous system.

Its subcellular location is the cell membrane. It is found in the endoplasmic reticulum membrane. The enzyme catalyses a 1-acyl-sn-glycero-3-phosphocholine(in) + Na(+)(in) = a 1-acyl-sn-glycero-3-phosphocholine(out) + Na(+)(out). The catalysed reaction is 1-(4Z,7Z,10Z,13Z,16Z,19Z-docosahexaenoyl)-sn-glycero-3-phosphocholine(in) + Na(+)(in) = 1-(4Z,7Z,10Z,13Z,16Z,19Z-docosahexaenoyl)-sn-glycero-3-phosphocholine(out) + Na(+)(out). It carries out the reaction 1-(9Z-octadecenoyl)-sn-glycero-3-phosphocholine(in) + Na(+)(in) = 1-(9Z-octadecenoyl)-sn-glycero-3-phosphocholine(out) + Na(+)(out). It catalyses the reaction 1-hexadecanoyl-sn-glycero-3-phosphocholine(in) + Na(+)(in) = 1-hexadecanoyl-sn-glycero-3-phosphocholine(out) + Na(+)(out). The enzyme catalyses a 1-acyl-sn-glycero-3-phosphoethanolamine(in) + Na(+)(in) = a 1-acyl-sn-glycero-3-phosphoethanolamine(out) + Na(+)(out). Functionally, sodium-dependent lysophosphatidylcholine (LPC) symporter, which plays an essential role for blood-brain barrier formation and function. Specifically expressed in endothelium of the blood-brain barrier of micro-vessels and transports LPC into the brain. Transport of LPC is essential because it constitutes the major mechanism by which docosahexaenoic acid (DHA), an omega-3 fatty acid that is essential for normal brain growth and cognitive function, enters the brain. Transports LPC carrying long-chain fatty acids such LPC oleate and LPC palmitate with a minimum acyl chain length of 14 carbons. Does not transport docosahexaenoic acid in unesterified fatty acid. This Danio rerio (Zebrafish) protein is Sodium-dependent lysophosphatidylcholine symporter 1-B (mfsd2ab).